A 425-amino-acid polypeptide reads, in one-letter code: Cell adhesion molecule CEACAM16 (425 aa).

An N-terminal signal peptide occupies residues 1 to 20 (MALTGYSWLLLSATFLNVGA). A glycan (N-linked (GlcNAc...) asparagine) is linked at Asn36. Ig-like C2-type domains follow at residues 133 to 218 (PTVL…INLT) and 223 to 309 (PERV…ASVV). The cysteines at positions 153 and 201 are disulfide-linked. Asn216 carries N-linked (GlcNAc...) asparagine glycosylation. Residues Cys252 and Cys293 are joined by a disulfide bond. N-linked (GlcNAc...) asparagine glycosylation is present at Asn394.

This sequence belongs to the immunoglobulin superfamily. CEA family. As to quaternary structure, homooligomer; can for homodimers and homotetramers. Interacts with TECTA and TECTB.

The protein localises to the secreted. Its function is as follows. Required for proper hearing, plays a role in maintaining the integrity of the tectorial membrane. This Homo sapiens (Human) protein is Cell adhesion molecule CEACAM16.